A 253-amino-acid polypeptide reads, in one-letter code: Triosephosphate isomerase (253 aa).

Position 8-10 (8-10 (NWK)) interacts with substrate. Residue His-93 is the Electrophile of the active site. The active-site Proton acceptor is the Glu-165. Substrate contacts are provided by residues Gly-171, Ser-210, and 231–232 (GG).

This sequence belongs to the triosephosphate isomerase family. In terms of assembly, homodimer.

Its subcellular location is the cytoplasm. It carries out the reaction D-glyceraldehyde 3-phosphate = dihydroxyacetone phosphate. It participates in carbohydrate biosynthesis; gluconeogenesis. Its pathway is carbohydrate degradation; glycolysis; D-glyceraldehyde 3-phosphate from glycerone phosphate: step 1/1. Involved in the gluconeogenesis. Catalyzes stereospecifically the conversion of dihydroxyacetone phosphate (DHAP) to D-glyceraldehyde-3-phosphate (G3P). This is Triosephosphate isomerase from Francisella tularensis subsp. mediasiatica (strain FSC147).